Here is a 435-residue protein sequence, read N- to C-terminus: Adenylosuccinate synthetase (435 aa).

Residues 19–25 (GDEGKGK) and 49–51 (GHT) contribute to the GTP site. Asp-20 (proton acceptor) is an active-site residue. Mg(2+) contacts are provided by Asp-20 and Gly-49. IMP is bound by residues 20-23 (DEGK), 47-50 (NAGH), Thr-139, Arg-153, Asn-233, Thr-248, and Arg-312. Catalysis depends on His-50, which acts as the Proton donor. Position 308–314 (308–314 (VTTGRKR)) interacts with substrate. GTP-binding positions include Arg-314, 340 to 342 (KLD), and 422 to 424 (GVG).

It belongs to the adenylosuccinate synthetase family. Homodimer. Mg(2+) serves as cofactor.

It localises to the cytoplasm. It catalyses the reaction IMP + L-aspartate + GTP = N(6)-(1,2-dicarboxyethyl)-AMP + GDP + phosphate + 2 H(+). It participates in purine metabolism; AMP biosynthesis via de novo pathway; AMP from IMP: step 1/2. Its function is as follows. Plays an important role in the de novo pathway and in the salvage pathway of purine nucleotide biosynthesis. Catalyzes the first committed step in the biosynthesis of AMP from IMP. The sequence is that of Adenylosuccinate synthetase from Brugia malayi (Filarial nematode worm).